Consider the following 271-residue polypeptide: Auxin-responsive protein IAA5 (271 aa).

Residues 1 to 96 are disordered; that stretch reads MSPPLEPHDY…RHGASSGSVA (96 aa). Low complexity-rich tracts occupy residues 14-33 and 40-50; these read SAAAASPTPSSSSCSSSPNP and PRLTLRLGLPG. The EAR-like (transcriptional repression) motif lies at 44–48; sequence LRLGL. Positions 151–255 constitute a PB1 domain; sequence PLYVKVSMDG…RKLKIMRGSD (105 aa).

Belongs to the Aux/IAA family. As to quaternary structure, homodimers and heterodimers.

It is found in the nucleus. Functionally, aux/IAA proteins are short-lived transcriptional factors that function as repressors of early auxin response genes at low auxin concentrations. The sequence is that of Auxin-responsive protein IAA5 (IAA5) from Oryza sativa subsp. japonica (Rice).